A 180-amino-acid chain; its full sequence is Large ribosomal subunit protein uL5 (180 aa).

This sequence belongs to the universal ribosomal protein uL5 family. As to quaternary structure, part of the 50S ribosomal subunit; part of the 5S rRNA/L5/L18/L25 subcomplex. Contacts the 5S rRNA and the P site tRNA. Forms a bridge to the 30S subunit in the 70S ribosome.

Its function is as follows. This is one of the proteins that bind and probably mediate the attachment of the 5S RNA into the large ribosomal subunit, where it forms part of the central protuberance. In the 70S ribosome it contacts protein S13 of the 30S subunit (bridge B1b), connecting the 2 subunits; this bridge is implicated in subunit movement. Contacts the P site tRNA; the 5S rRNA and some of its associated proteins might help stabilize positioning of ribosome-bound tRNAs. This chain is Large ribosomal subunit protein uL5, found in Rubrobacter xylanophilus (strain DSM 9941 / JCM 11954 / NBRC 16129 / PRD-1).